The following is a 475-amino-acid chain: Ribulose bisphosphate carboxylase large chain (475 aa).

Positions 1-2 (MS) are excised as a propeptide. Proline 3 bears the N-acetylproline mark. Residue lysine 14 is modified to N6,N6,N6-trimethyllysine. Residues asparagine 123 and threonine 173 each contribute to the substrate site. Lysine 175 functions as the Proton acceptor in the catalytic mechanism. Lysine 177 is a binding site for substrate. Mg(2+) contacts are provided by lysine 201, aspartate 203, and glutamate 204. Lysine 201 is modified (N6-carboxylysine). Catalysis depends on histidine 294, which acts as the Proton acceptor. Positions 295, 327, and 379 each coordinate substrate.

This sequence belongs to the RuBisCO large chain family. Type I subfamily. In terms of assembly, heterohexadecamer of 8 large chains and 8 small chains. Mg(2+) serves as cofactor.

It is found in the plastid. It localises to the chloroplast. It carries out the reaction 2 (2R)-3-phosphoglycerate + 2 H(+) = D-ribulose 1,5-bisphosphate + CO2 + H2O. The enzyme catalyses D-ribulose 1,5-bisphosphate + O2 = 2-phosphoglycolate + (2R)-3-phosphoglycerate + 2 H(+). RuBisCO catalyzes two reactions: the carboxylation of D-ribulose 1,5-bisphosphate, the primary event in carbon dioxide fixation, as well as the oxidative fragmentation of the pentose substrate in the photorespiration process. Both reactions occur simultaneously and in competition at the same active site. The chain is Ribulose bisphosphate carboxylase large chain from Coleochaete orbicularis (Charophycean green alga).